A 362-amino-acid polypeptide reads, in one-letter code: Chemerin-like receptor 1 (362 aa).

Residues 1–37 (MEAEDYNASYEDYPDDVDPIVVLEELSPLEGRVVRIL) lie on the Extracellular side of the membrane. N7 is a glycosylation site (N-linked (GlcNAc...) asparagine). Residues 38–58 (LVAVYSVICLLGILGNGLVIV) form a helical membrane-spanning segment. Over 59 to 70 (MITCKMKRTVNT) the chain is Cytoplasmic. A helical transmembrane segment spans residues 71–91 (VWFLNLAVADFLFNVFLPVHI). The Extracellular portion of the chain corresponds to 92–108 (AYAALDYHWVFGTAMCK). A disulfide bridge connects residues C107 and C184. The chain crosses the membrane as a helical span at residues 109–129 (ISNFLLIHNMFTSVFLLTVIS). Residues 130-151 (FDRCVSVLLPVWSQNHRSVRLA) are Cytoplasmic-facing. A helical membrane pass occupies residues 152-172 (YTACLVIWVLAFFLSSPSLVF). Topologically, residues 173–219 (RDTARLHGKISCFNNFSLSAAVSSPWPAHPQVDPVGSGRHKVVTITR) are extracellular. N187 carries an N-linked (GlcNAc...) asparagine glycan. The chain crosses the membrane as a helical span at residues 220 to 240 (FLCGFLVPGLITTACYLTIVY). Residues 241-255 (KLQRSRLAKTKKPFK) lie on the Cytoplasmic side of the membrane. The chain crosses the membrane as a helical span at residues 256 to 276 (IILTIIVTFFLCWCPYHAFYL). Over 277 to 281 (LELRR) the chain is Extracellular. The helical transmembrane segment at 282–302 (GSVPPSVFSLGVPLATAIAIA) threads the bilayer. Over 303-362 (NSCMNPILYVFMGQDFKKFRVALFSRLVNALSEDTGHSSYPSHRSFTKMSSMNERETGML) the chain is Cytoplasmic. A Phosphoserine modification is found at S334. Residues 336 to 362 (DTGHSSYPSHRSFTKMSSMNERETGML) are disordered. T337 bears the Phosphothreonine mark. Residues 339-354 (HSSYPSHRSFTKMSSM) are compositionally biased toward polar residues. S344, S347, and S353 each carry phosphoserine.

It belongs to the chemokine-like receptor (CMKLR) family. Widely expressed in several tissues including adipose, muscle, liver and brain.

It is found in the cell membrane. In terms of biological role, receptor for the chemoattractant adipokine chemerin/RARRES2 and for the omega-3 fatty acid derived molecule resolvin E1. Interaction with RARRES2 initiates activation of G proteins G(i)/G(o) and beta-arrestin pathways inducing cellular responses via second messenger pathways such as intracellular calcium mobilization, phosphorylation of MAP kinases MAPK1/MAPK3 (ERK1/2), TYRO3, MAPK14/P38MAPK and PI3K leading to multifunctional effects, like, reduction of immune responses, enhancing of adipogenesis and angionesis. Resolvin E1 down-regulates cytokine production in macrophages by reducing the activation of MAPK1/3 (ERK1/2) and NF-kappa-B. Positively regulates adipogenesis and adipocyte metabolism. This chain is Chemerin-like receptor 1 (CMLKR1), found in Bos taurus (Bovine).